Consider the following 115-residue polypeptide: Fluoride-specific ion channel FluC 4 (115 aa).

2 consecutive transmembrane segments (helical) span residues W19–G39 and L42–G62. G61 and T64 together coordinate Na(+). The helical transmembrane segment at I89 to W109 threads the bilayer.

The protein belongs to the fluoride channel Fluc/FEX (TC 1.A.43) family.

It localises to the cell inner membrane. It catalyses the reaction fluoride(in) = fluoride(out). Its activity is regulated as follows. Na(+) is not transported, but it plays an essential structural role and its presence is essential for fluoride channel function. Fluoride-specific ion channel. Important for reducing fluoride concentration in the cell, thus reducing its toxicity. This Brucella melitensis biotype 1 (strain ATCC 23456 / CCUG 17765 / NCTC 10094 / 16M) protein is Fluoride-specific ion channel FluC 4.